We begin with the raw amino-acid sequence, 719 residues long: MVSNLLKGLILFSLFISFLNGDDKIFPVTIRDLSPMTNPDFEIKNNNTLVKGIVKSKLNHSDRSPVYCCGDNHAPSNDAYNFVVHNQSTFHSWFHDVPGVNVPVLSKLVFKQNQTDPRVFYYETPSFFPIDDLGFKDPNYKGKKINEPNYMSKDKFAHNYHFCLEMHASFFYIGGEEFNFKGDDDVWVFINDDLVIDLGAPHTAESASVDLDKLGLIKGKSYNFDFFYCERHTTESYIHISTSIDLECKWKDYCGVCEGTGKCCDVSQCTGSLSPCGSWECPPPNIGTKEWKYNCIMKEPNCTLLDTMCTSYECNAISKTCEPRENVDPCAYTNSCEKKVCSEELGGCYEVEKKCYSEAFSDPTCYELPCVNGTCTVNRLCDIPDKCIISTCIEGNGCSHLKKQCSDKDYCTIDSCSSITGECFFDRVKDCQPCNETLCATDESNLCVRTECNPYDNSTCNEIKLVDCDDGNLCTNDICDPATGKCSNLPVVCEIKDACNKPQCDMVTGKCIVTDNCNDNNICSDDSCSLDGTCIHTKKNCDDGNKCTNDFCKVDIGCVHSNITCESSSVCMVASCDSNKGCIESPIVCPSSAFCLVAQCDVGYGGCNQYDKVCIPDDPHCQYGICDNSTKKCTFKDFDPLPFRCQSVAVKAGVIGGAAIAGVVVGGAVALGLALFGAKAGYNHWMSLKNNQMATSSVNPLYEPSPHQGTNPLWEAPPT.

The N-terminal stretch at 1 to 21 (MVSNLLKGLILFSLFISFLNG) is a signal peptide. Over 22–653 (DDKIFPVTIR…RCQSVAVKAG (632 aa)) the chain is Extracellular. N46, N59, N86, N113, N301, N372, N435, N457, N562, and N628 each carry an N-linked (GlcNAc...) asparagine glycan. Residues 112-260 (QNQTDPRVFY…KDYCGVCEGT (149 aa)) form the PA14 domain. The helical transmembrane segment at 654-674 (VIGGAAIAGVVVGGAVALGLA) threads the bilayer. Over 675 to 719 (LFGAKAGYNHWMSLKNNQMATSSVNPLYEPSPHQGTNPLWEAPPT) the chain is Cytoplasmic.

This sequence belongs to the prespore-cell-inducing factor family.

Its subcellular location is the membrane. This Dictyostelium discoideum (Social amoeba) protein is Protein psiJ (psiJ).